The following is a 764-amino-acid chain: Protein sey1 (764 aa).

The Cytoplasmic portion of the chain corresponds to 1 to 659 (MQQSAQLITE…KRSIISTATR (659 aa)). The GB1/RHD3-type G domain maps to 31 to 246 (GFDYHVVAVL…NPKYLFKPCY (216 aa)). 41 to 48 (GSQSTGKS) is a GTP binding site. Coiled-coil stretches lie at residues 302 to 322 (EELL…QRLE) and 421 to 443 (DAEQ…MREE). Residues 660–680 (VPGYFWALLAVLGWNEFVSVL) form a helical membrane-spanning segment. Residues 681 to 683 (KNP) are Lumenal-facing. Residues 684–704 (VLLTLLLIVVSFLFILVQTGL) traverse the membrane as a helical segment. Over 705 to 764 (AGPVKAFAERSVRNAVNSMGEKLAEKLDDYRSTSPASETTSGRVISAENSSVDEKVSTTP) the chain is Cytoplasmic. The interval 731-764 (LDDYRSTSPASETTSGRVISAENSSVDEKVSTTP) is disordered. Positions 736-754 (STSPASETTSGRVISAENS) are enriched in polar residues.

The protein belongs to the TRAFAC class dynamin-like GTPase superfamily. GB1/RHD3 GTPase family. RHD3 subfamily.

It is found in the endoplasmic reticulum membrane. In terms of biological role, cooperates with the reticulon proteins and tubule-shaping DP1 family proteins to generate and maintain the structure of the tubular endoplasmic reticulum network. Has GTPase activity, which is required for its function in ER organization. The chain is Protein sey1 (sey1) from Schizosaccharomyces japonicus (strain yFS275 / FY16936) (Fission yeast).